The primary structure comprises 370 residues: DNA replication and repair protein RecF (370 aa).

Position 30 to 37 (30 to 37) interacts with ATP; the sequence is GENAQGKT.

The protein belongs to the RecF family.

Its subcellular location is the cytoplasm. In terms of biological role, the RecF protein is involved in DNA metabolism; it is required for DNA replication and normal SOS inducibility. RecF binds preferentially to single-stranded, linear DNA. It also seems to bind ATP. This is DNA replication and repair protein RecF from Staphylococcus carnosus (strain TM300).